A 160-amino-acid polypeptide reads, in one-letter code: Protein MGF 300-2R (160 aa).

The protein belongs to the asfivirus MGF 300 family.

Functionally, plays a role in virus cell tropism, and may be required for efficient virus replication in macrophages. The chain is Protein MGF 300-2R from African swine fever virus (isolate Pig/Kenya/KEN-50/1950) (ASFV).